We begin with the raw amino-acid sequence, 338 residues long: Tryptophan--tRNA ligase (338 aa).

ATP is bound by residues 11–13 and 19–20; these read QPS and GN. Positions 12 to 20 match the 'HIGH' region motif; the sequence is PSGELSIGN. D135 is a binding site for L-tryptophan. ATP is bound by residues 147 to 149, V189, and 198 to 202; these read GSD and KMSKS. The 'KMSKS' region motif lies at 198-202; the sequence is KMSKS.

It belongs to the class-I aminoacyl-tRNA synthetase family. Homodimer.

The protein resides in the cytoplasm. The catalysed reaction is tRNA(Trp) + L-tryptophan + ATP = L-tryptophyl-tRNA(Trp) + AMP + diphosphate + H(+). Functionally, catalyzes the attachment of tryptophan to tRNA(Trp). This chain is Tryptophan--tRNA ligase, found in Vibrio vulnificus (strain CMCP6).